Here is a 307-residue protein sequence, read N- to C-terminus: tRNA pseudouridine synthase B (307 aa).

Catalysis depends on D47, which acts as the Nucleophile.

Belongs to the pseudouridine synthase TruB family. Type 1 subfamily.

The catalysed reaction is uridine(55) in tRNA = pseudouridine(55) in tRNA. In terms of biological role, responsible for synthesis of pseudouridine from uracil-55 in the psi GC loop of transfer RNAs. This Chromohalobacter salexigens (strain ATCC BAA-138 / DSM 3043 / CIP 106854 / NCIMB 13768 / 1H11) protein is tRNA pseudouridine synthase B.